A 157-amino-acid polypeptide reads, in one-letter code: Transcription elongation factor GreA (157 aa).

Belongs to the GreA/GreB family.

Its function is as follows. Necessary for efficient RNA polymerase transcription elongation past template-encoded arresting sites. The arresting sites in DNA have the property of trapping a certain fraction of elongating RNA polymerases that pass through, resulting in locked ternary complexes. Cleavage of the nascent transcript by cleavage factors such as GreA or GreB allows the resumption of elongation from the new 3'terminus. GreA releases sequences of 2 to 3 nucleotides. The sequence is that of Transcription elongation factor GreA from Azorhizobium caulinodans (strain ATCC 43989 / DSM 5975 / JCM 20966 / LMG 6465 / NBRC 14845 / NCIMB 13405 / ORS 571).